The chain runs to 430 residues: UDP-N-acetylglucosamine 1-carboxyvinyltransferase (430 aa).

22 to 23 (KN) contacts phosphoenolpyruvate. A UDP-N-acetyl-alpha-D-glucosamine-binding site is contributed by R102. Catalysis depends on C126, which acts as the Proton donor. The residue at position 126 (C126) is a 2-(S-cysteinyl)pyruvic acid O-phosphothioketal. UDP-N-acetyl-alpha-D-glucosamine-binding positions include 131–135 (RPVDL), 172–175 (KVSV), D317, and I339.

This sequence belongs to the EPSP synthase family. MurA subfamily.

It localises to the cytoplasm. The catalysed reaction is phosphoenolpyruvate + UDP-N-acetyl-alpha-D-glucosamine = UDP-N-acetyl-3-O-(1-carboxyvinyl)-alpha-D-glucosamine + phosphate. Its pathway is cell wall biogenesis; peptidoglycan biosynthesis. Functionally, cell wall formation. Adds enolpyruvyl to UDP-N-acetylglucosamine. This Sinorhizobium medicae (strain WSM419) (Ensifer medicae) protein is UDP-N-acetylglucosamine 1-carboxyvinyltransferase.